The primary structure comprises 314 residues: uncharacterized protein (314 aa).

Composition is skewed to basic residues over residues 1–16 and 49–65; these read MAGN…KAGT and AAKR…RRPA. The disordered stretch occupies residues 1 to 73; sequence MAGNSKRRGA…PARKTDETEL (73 aa). S-adenosyl-L-methionine-binding residues include Gly-266, Ile-286, and Leu-295.

This sequence belongs to the class IV-like SAM-binding methyltransferase superfamily. RNA methyltransferase TrmH family.

This is an uncharacterized protein from Mycobacterium sp. (strain KMS).